Reading from the N-terminus, the 441-residue chain is Glutamyl-tRNA reductase (441 aa).

Substrate contacts are provided by residues 47 to 50 (TCNR), Ser-110, 115 to 117 (ERE), and Gln-121. The active-site Nucleophile is Cys-48. Position 192–197 (192–197 (GTGAYA)) interacts with NADP(+).

It belongs to the glutamyl-tRNA reductase family. As to quaternary structure, homodimer.

It catalyses the reaction (S)-4-amino-5-oxopentanoate + tRNA(Glu) + NADP(+) = L-glutamyl-tRNA(Glu) + NADPH + H(+). The protein operates within porphyrin-containing compound metabolism; protoporphyrin-IX biosynthesis; 5-aminolevulinate from L-glutamyl-tRNA(Glu): step 1/2. Catalyzes the NADPH-dependent reduction of glutamyl-tRNA(Glu) to glutamate 1-semialdehyde (GSA). This is Glutamyl-tRNA reductase from Pseudarthrobacter chlorophenolicus (strain ATCC 700700 / DSM 12829 / CIP 107037 / JCM 12360 / KCTC 9906 / NCIMB 13794 / A6) (Arthrobacter chlorophenolicus).